The following is an 837-amino-acid chain: E3 ubiquitin-protein ligase bre-1 (837 aa).

A disordered region spans residues 1–33; sequence MMKRSNEGIGGENYASSPSDDGQQKRRKIQFEP. Residues 1–313 form an interaction with ubc-1 region; it reads MMKRSNEGIG…AKEIENLRLE (313 aa). 2 coiled-coil regions span residues 54–89 and 185–253; these read TSKL…ESNF and HKEL…KHMR. The interval 269 to 302 is disordered; the sequence is GQSGGNGGATPSSSGTTNATEKKISAPDIPPSET. The segment covering 277–287 has biased composition (polar residues); the sequence is ATPSSSGTTNA. 3 coiled-coil regions span residues 300–397, 458–651, and 677–763; these read SETA…AFRS, DEMK…KAQT, and VQFK…NESV. The RING-type zinc finger occupies 785-824; the sequence is CPSCKTRPKDCIMLKCYHLFCETCIKTMYDTRQRKCPKCN.

It belongs to the BRE1 family. As to quaternary structure, interacts with ubc-1. Interacts with mrg-1. In adult animals, expressed in oocytes, germ cells, pharyngeal and intestinal cells.

The protein resides in the nucleus. It carries out the reaction S-ubiquitinyl-[E2 ubiquitin-conjugating enzyme]-L-cysteine + [acceptor protein]-L-lysine = [E2 ubiquitin-conjugating enzyme]-L-cysteine + N(6)-ubiquitinyl-[acceptor protein]-L-lysine.. It functions in the pathway protein modification; protein ubiquitination. E3 ubiquitin-protein ligase that mediates monoubiquitination of 'Lys-117' of histone H2B. H2B 'Lys-117' ubiquitination gives a specific tag for epigenetic transcriptional activation and is also prerequisite for histone H3 'Lys-4' and 'Lys-79' methylation. Involved in regulating stem cell proliferative fate. This is E3 ubiquitin-protein ligase bre-1 (rfp-1) from Caenorhabditis elegans.